Consider the following 1074-residue polypeptide: DNA annealing helicase and endonuclease ZRANB3 (1074 aa).

Positions 46-208 constitute a Helicase ATP-binding domain; sequence TFALRRDGRC…FMQIEALFPQ (163 aa). Positions 46–481 are DNA annealing helicase activity; that stretch reads TFALRRDGRC…GRKEKLQAEE (436 aa). 59-66 lines the ATP pocket; sequence DEMGLGKT. Residues 157-160 carry the DEAH box motif; it reads DESH. The Helicase C-terminal domain maps to 325–481; the sequence is AVKDYIKMML…GRKEKLQAEE (157 aa). Positions 519–526 match the PIP-box motif; that stretch reads QRDIRSFF. Ser-566 carries the post-translational modification Phosphoserine. The RanBP2-type zinc finger occupies 617-647; it reads FCGEGWQCAFCTYINNSVLPYCEMCENPRGG. The interval 659–719 is disordered; sequence QNKNKNEKDD…RLTPQPGDEQ (61 aa). 2 stretches are compositionally biased toward basic and acidic residues: residues 662–674 and 696–711; these read NKNE…DTSK and AKSK…EDRL. An HNH domain is found at 1006-1046; it reads PGEGHFWQVDHIKPVSGGGGQCSLDNLQTLCTVCHRERTAQ. The interval 1006–1074 is endonuclease activity; sequence PGEGHFWQVD…SDITRFLVKK (69 aa). Residues 1069–1073 carry the APIM motif motif; the sequence is RFLVK.

Belongs to the SNF2/RAD54 helicase family. In terms of assembly, interacts (via PIP-box and RanBP2-type zinc finger) with PCNA (when PCNA is polyubiquitinated via 'Lys-63'-linked polyubiquitin).

It is found in the nucleus. The protein localises to the chromosome. In terms of biological role, DNA annealing helicase and endonuclease required to maintain genome stability at stalled or collapsed replication forks by facilitating fork restart and limiting inappropriate recombination that could occur during template switching events. Recruited to the sites of stalled DNA replication by polyubiquitinated PCNA and acts as a structure-specific endonuclease that cleaves the replication fork D-loop intermediate, generating an accessible 3'-OH group in the template of the leading strand, which is amenable to extension by DNA polymerase. In addition to endonuclease activity, also catalyzes the fork regression via annealing helicase activity in order to prevent disintegration of the replication fork and the formation of double-strand breaks. The polypeptide is DNA annealing helicase and endonuclease ZRANB3 (ZRANB3) (Bos taurus (Bovine)).